Consider the following 236-residue polypeptide: Lipoprotein signal peptidase (236 aa).

Transmembrane regions (helical) follow at residues 8 to 28 (FYGIALLAVVIDQVLKLWVYF), 44 to 64 (WFKLFYTLNPGMAFGIQFGFT), 68 to 88 (VLLTIIRIIATSMIIKYIWNL), and 98 to 118 (LLWGWSLILGGAAGNGIDSIF). Residues aspartate 141 and aspartate 174 contribute to the active site. The chain crosses the membrane as a helical span at residues 166-186 (CLPVFNLADVAILAGVALIVL).

This sequence belongs to the peptidase A8 family.

The protein localises to the cell inner membrane. The enzyme catalyses Release of signal peptides from bacterial membrane prolipoproteins. Hydrolyzes -Xaa-Yaa-Zaa-|-(S,diacylglyceryl)Cys-, in which Xaa is hydrophobic (preferably Leu), and Yaa (Ala or Ser) and Zaa (Gly or Ala) have small, neutral side chains.. It participates in protein modification; lipoprotein biosynthesis (signal peptide cleavage). Functionally, this protein specifically catalyzes the removal of signal peptides from prolipoproteins. This Amoebophilus asiaticus (strain 5a2) protein is Lipoprotein signal peptidase.